We begin with the raw amino-acid sequence, 294 residues long: N-acetylmuramic acid 6-phosphate etherase (294 aa).

One can recognise an SIS domain in the interval 54 to 217 (VIQSFEEEGR…STASMIGVGK (164 aa)). Residue E82 is the Proton donor of the active site. Residue E113 is part of the active site.

The protein belongs to the GCKR-like family. MurNAc-6-P etherase subfamily. Homodimer.

The enzyme catalyses N-acetyl-D-muramate 6-phosphate + H2O = N-acetyl-D-glucosamine 6-phosphate + (R)-lactate. It functions in the pathway amino-sugar metabolism; N-acetylmuramate degradation. Its function is as follows. Specifically catalyzes the cleavage of the D-lactyl ether substituent of MurNAc 6-phosphate, producing GlcNAc 6-phosphate and D-lactate. The protein is N-acetylmuramic acid 6-phosphate etherase of Bacillus cereus (strain ZK / E33L).